The chain runs to 270 residues: Interleukin-33 (270 aa).

The homeodomain-like HTH domain stretch occupies residues 1–65 (MKPKMKYSTN…EACYFRRETT (65 aa)). Positions 1–94 (MKPKMKYSTN…CQQQSTVECF (94 aa)) are excised as a propeptide. The interaction with RELA stretch occupies residues 64–111 (TTKRPSLKTGRKHKRHLVLAACQQQSTVECFAFGISGVQKYTRALHDS).

The protein belongs to the IL-1 family. Highly divergent. Forms a 1:1:1 heterotrimeric complex with its primary high-affinity receptor IL1RL1 and the coreceptor IL1RAP. Interacts with cargo receptor TMED10; the interaction mediates the translocation from the cytoplasm into the ERGIC (endoplasmic reticulum-Golgi intermediate compartment) and thereby secretion. As to quaternary structure, (Microbial infection) Interacts (in reduced form) with H.polygyrus ARI. Post-translationally, the full-length protein can be released from cells and is able to signal via the IL1RL1/ST2 receptor. However, proteolytic processing by CELA1, CSTG/cathepsin G and ELANE/neutrophil elastase produces C-terminal peptides that are more active than the unprocessed full length protein. May also be proteolytically processed by calpains. Proteolytic cleavage mediated by apoptotic caspases including CASP3 and CASP7 results in IL33 inactivation. In vitro proteolytic cleavage by CASP1 was reported but could not be confirmed in vivo suggesting that IL33 is probably not a direct substrate for that caspase. As to expression, expressed at high level in high endothelial venules found in tonsils, Peyer patches and mesenteric lymph nodes. Almost undetectable in placenta.

It is found in the nucleus. It localises to the chromosome. The protein resides in the cytoplasm. Its subcellular location is the cytoplasmic vesicle. The protein localises to the secretory vesicle. It is found in the secreted. Cytokine that binds to and signals through the IL1RL1/ST2 receptor which in turn activates NF-kappa-B and MAPK signaling pathways in target cells. Involved in the maturation of Th2 cells inducing the secretion of T-helper type 2-associated cytokines. Also involved in activation of mast cells, basophils, eosinophils and natural killer cells. Acts as an enhancer of polarization of alternatively activated macrophages. Acts as a chemoattractant for Th2 cells, and may function as an 'alarmin', that amplifies immune responses during tissue injury. Induces rapid UCP2-dependent mitochondrial rewiring that attenuates the generation of reactive oxygen species and preserves the integrity of Krebs cycle required for persistent production of itaconate and subsequent GATA3-dependent differentiation of inflammation-resolving alternatively activated macrophages. In terms of biological role, in quiescent endothelia the uncleaved form is constitutively and abundantly expressed, and acts as a chromatin-associated nuclear factor with transcriptional repressor properties, it may sequester nuclear NF-kappaB/RELA, lowering expression of its targets. This form is rapidely lost upon angiogenic or pro-inflammatory activation. This Homo sapiens (Human) protein is Interleukin-33.